A 150-amino-acid chain; its full sequence is uncharacterized protein (150 aa).

The protein belongs to the aspartate/glutamate racemases family.

This is an uncharacterized protein from Pectobacterium carotovorum subsp. carotovorum (Erwinia carotovora subsp. carotovora).